Reading from the N-terminus, the 520-residue chain is Cytochrome P450 4F2 (520 aa).

A propeptide spanning residues 1–4 is cleaved from the precursor; it reads MSQL. Residues Glu328 and Cys468 each contribute to the heme site.

The protein belongs to the cytochrome P450 family. Requires heme as cofactor. As to expression, liver. Also present in kidney: specifically expressed in the S2 and S3 segments of proximal tubules in cortex and outer medulla.

Its subcellular location is the microsome membrane. It is found in the endoplasmic reticulum membrane. It carries out the reaction an organic molecule + reduced [NADPH--hemoprotein reductase] + O2 = an alcohol + oxidized [NADPH--hemoprotein reductase] + H2O + H(+). The enzyme catalyses (5Z,8Z,11Z,14Z)-eicosatetraenoate + reduced [NADPH--hemoprotein reductase] + O2 = 20-hydroxy-(5Z,8Z,11Z,14Z)-eicosatetraenoate + oxidized [NADPH--hemoprotein reductase] + H2O + H(+). The catalysed reaction is (5Z,8Z,11Z)-eicosatrienoate + reduced [NADPH--hemoprotein reductase] + O2 = 20-hydroxy-(5Z,8Z,11Z)-eicosatrienoate + oxidized [NADPH--hemoprotein reductase] + H2O + H(+). It catalyses the reaction (5Z,8Z,11Z,14Z,17Z)-eicosapentaenoate + reduced [NADPH--hemoprotein reductase] + O2 = 20-hydroxy-(5Z,8Z,11Z,14Z,17Z)-eicosapentaenoate + oxidized [NADPH--hemoprotein reductase] + H2O + H(+). It carries out the reaction (4Z,7Z,10Z,13Z,16Z,19Z)-docosahexaenoate + reduced [NADPH--hemoprotein reductase] + O2 = 22-hydroxy-(4Z,7Z,10Z,13Z,16Z,19Z)-docosahexaenoate + oxidized [NADPH--hemoprotein reductase] + H2O + H(+). The enzyme catalyses 8,9-epoxy-(5Z,11Z,14Z)-eicosatrienoate + reduced [NADPH--hemoprotein reductase] + O2 = 20-hydroxy-8,9-epoxy-(5Z,11Z,14Z)-eicosatrienoate + oxidized [NADPH--hemoprotein reductase] + H2O + H(+). The catalysed reaction is (9S,10R)-epoxy-octadecanoate + reduced [NADPH--hemoprotein reductase] + O2 = 18-hydroxy-(9S,10R)-epoxy-octadecanoate + oxidized [NADPH--hemoprotein reductase] + H2O + H(+). It catalyses the reaction (9R,10S)-epoxy-octadecanoate + reduced [NADPH--hemoprotein reductase] + O2 = 18-hydroxy-(9R,10S)-epoxy-octadecanoate + oxidized [NADPH--hemoprotein reductase] + H2O + H(+). It carries out the reaction 12,13-epoxy-(9Z)-octadecenoate + reduced [NADPH--hemoprotein reductase] + O2 = 18-hydroxy-12,13-epoxy-(9Z)-octadecenoate + oxidized [NADPH--hemoprotein reductase] + H2O + H(+). The enzyme catalyses 9,10-epoxy-(12Z)-octadecenoate + reduced [NADPH--hemoprotein reductase] + O2 = 18-hydroxy-9,10-epoxy-(12Z)-octadecenoate + oxidized [NADPH--hemoprotein reductase] + H2O + H(+). The catalysed reaction is 8-hydroxy-(5Z,9E,11Z,14Z)-eicosatetraenoate + reduced [NADPH--hemoprotein reductase] + O2 = 8,20-dihydroxy-(5Z,9E,11Z,14Z)-eicosatetraenoate + oxidized [NADPH--hemoprotein reductase] + H2O + H(+). It catalyses the reaction 12-hydroxy-(5Z,8Z,10E,14Z)-eicosatetraenoate + reduced [NADPH--hemoprotein reductase] + O2 = 12,20-dihydroxy-(5Z,8Z,10E,14Z)-eicosatetraenoate + oxidized [NADPH--hemoprotein reductase] + H2O + H(+). It carries out the reaction 12-hydroxyoctadecanoate + reduced [NADPH--hemoprotein reductase] + O2 = 12,18-dihydroxyoctadecanoate + oxidized [NADPH--hemoprotein reductase] + H2O + H(+). The enzyme catalyses docosanoate + reduced [NADPH--hemoprotein reductase] + O2 = 22-hydroxydocosanoate + oxidized [NADPH--hemoprotein reductase] + H2O + H(+). The catalysed reaction is 22-hydroxydocosanoate + reduced [NADPH--hemoprotein reductase] + O2 = 22-oxodocosanoate + oxidized [NADPH--hemoprotein reductase] + 2 H2O + H(+). It catalyses the reaction 22-oxodocosanoate + reduced [NADPH--hemoprotein reductase] + O2 = docosanedioate + oxidized [NADPH--hemoprotein reductase] + H2O + 2 H(+). It carries out the reaction tetracosanoate + reduced [NADPH--hemoprotein reductase] + O2 = 24-hydroxytetracosanoate + oxidized [NADPH--hemoprotein reductase] + H2O + H(+). The enzyme catalyses hexacosanoate + reduced [NADPH--hemoprotein reductase] + O2 = 26-hydroxyhexacosanoate + oxidized [NADPH--hemoprotein reductase] + H2O + H(+). The catalysed reaction is 26-hydroxyhexacosanoate + reduced [NADPH--hemoprotein reductase] + O2 = 26-oxohexacosanoate + oxidized [NADPH--hemoprotein reductase] + 2 H2O + H(+). It catalyses the reaction 26-oxohexacosanoate + reduced [NADPH--hemoprotein reductase] + O2 = hexacosanedioate + oxidized [NADPH--hemoprotein reductase] + H2O + 2 H(+). It carries out the reaction 3-hydroxyoctadecanoate + reduced [NADPH--hemoprotein reductase] + O2 = 3,18-dihydroxyoctadecanoate + oxidized [NADPH--hemoprotein reductase] + H2O + H(+). The enzyme catalyses 3-hydroxyhexadecanoate + reduced [NADPH--hemoprotein reductase] + O2 = 3,16-dihydroxyhexadecanoate + oxidized [NADPH--hemoprotein reductase] + H2O + H(+). The catalysed reaction is leukotriene B4 + reduced [NADPH--hemoprotein reductase] + O2 = 20-hydroxy-leukotriene B4 + oxidized [NADPH--hemoprotein reductase] + H2O + H(+). It catalyses the reaction 6-trans-leukotriene B4 + reduced [NADPH--hemoprotein reductase] + O2 = 20-hydroxy-6-trans-leukotriene B4 + oxidized [NADPH--hemoprotein reductase] + H2O + H(+). It carries out the reaction lipoxin A4 + reduced [NADPH--hemoprotein reductase] + O2 = 20-hydroxy-lipoxin A4 + oxidized [NADPH--hemoprotein reductase] + H2O + H(+). The enzyme catalyses menaquinone-4 + reduced [NADPH--hemoprotein reductase] + O2 = omega-hydroxymenaquinone-4 + oxidized [NADPH--hemoprotein reductase] + H2O + H(+). The catalysed reaction is phylloquinone + reduced [NADPH--hemoprotein reductase] + O2 = omega-hydroxyphylloquinone + oxidized [NADPH--hemoprotein reductase] + H2O + H(+). It catalyses the reaction (+)-alpha-tocopherol + reduced [NADPH--hemoprotein reductase] + O2 = 13-hydroxy-alpha-tocopherol + oxidized [NADPH--hemoprotein reductase] + H2O + H(+). It carries out the reaction gamma-tocopherol + NADPH + O2 + H(+) = 13-hydroxy-gamma-tocopherol + NADP(+) + H2O. It functions in the pathway lipid metabolism; arachidonate metabolism. Its pathway is lipid metabolism; leukotriene B4 degradation. It participates in cofactor degradation; phylloquinone degradation. With respect to regulation, inhibited by dietary sesamin. Its function is as follows. A cytochrome P450 monooxygenase involved in the metabolism of various endogenous substrates, including fatty acids, eicosanoids and vitamins. Mechanistically, uses molecular oxygen inserting one oxygen atom into a substrate, and reducing the second into a water molecule, with two electrons provided by NADPH via cytochrome P450 reductase (CPR; NADPH-ferrihemoprotein reductase). Catalyzes predominantly the oxidation of the terminal carbon (omega-oxidation) of long- and very long-chain fatty acids. Displays high omega-hydroxylase activity toward polyunsaturated fatty acids (PUFAs). Participates in the conversion of arachidonic acid to omega-hydroxyeicosatetraenoic acid (20-HETE), a signaling molecule acting both as vasoconstrictive and natriuretic with overall effect on arterial blood pressure. Plays a role in the oxidative inactivation of eicosanoids, including both pro-inflammatory and anti-inflammatory mediators such as leukotriene B4 (LTB4), lipoxin A4 (LXA4), and several HETEs. Catalyzes omega-hydroxylation of 3-hydroxy fatty acids. Converts monoepoxides of linoleic acid leukotoxin and isoleukotoxin to omega-hydroxylated metabolites. Contributes to the degradation of very long-chain fatty acids (VLCFAs) by catalyzing successive omega-oxidations and chain shortening. Plays an important role in vitamin metabolism by chain shortening. Catalyzes omega-hydroxylation of the phytyl chain of tocopherols (forms of vitamin E), with preference for gamma-tocopherols over alpha-tocopherols, thus promoting retention of alpha-tocopherols in tissues. Omega-hydroxylates and inactivates phylloquinone (vitamin K1), and menaquinone-4 (MK-4, a form of vitamin K2), both acting as cofactors in blood coagulation. The sequence is that of Cytochrome P450 4F2 from Homo sapiens (Human).